A 401-amino-acid polypeptide reads, in one-letter code: UPF0242 protein CCA_01002 (401 aa).

Belongs to the UPF0242 family.

The protein is UPF0242 protein CCA_01002 of Chlamydia caviae (strain ATCC VR-813 / DSM 19441 / 03DC25 / GPIC) (Chlamydophila caviae).